A 139-amino-acid chain; its full sequence is Large ribosomal subunit protein uL24 (139 aa).

Residues 1–25 (MKRNTNVSSSRRKSRKAHFTASSGE) are disordered.

It belongs to the universal ribosomal protein uL24 family.

This Dictyostelium discoideum (Social amoeba) protein is Large ribosomal subunit protein uL24 (rpl26).